The primary structure comprises 183 residues: Ribosome rescue factor SmrB (183 aa).

One can recognise a Smr domain in the interval 98 to 173 (LDLHGLTQLQ…GDAALLVLIE (76 aa)).

It belongs to the SmrB family. As to quaternary structure, associates with collided ribosomes, but not with correctly translating polysomes.

Functionally, acts as a ribosome collision sensor. Detects stalled/collided disomes (pairs of ribosomes where the leading ribosome is stalled and a second ribosome has collided with it) and endonucleolytically cleaves mRNA at the 5' boundary of the stalled ribosome. Stalled/collided disomes form a new interface (primarily via the 30S subunits) that binds SmrB. Cleaved mRNA becomes available for tmRNA ligation, leading to ribosomal subunit dissociation and rescue of stalled ribosomes. This chain is Ribosome rescue factor SmrB, found in Escherichia coli (strain 55989 / EAEC).